A 503-amino-acid chain; its full sequence is Aspartyl/glutamyl-tRNA(Asn/Gln) amidotransferase subunit B (503 aa).

The protein belongs to the GatB/GatE family. GatB subfamily. As to quaternary structure, heterotrimer of A, B and C subunits.

It carries out the reaction L-glutamyl-tRNA(Gln) + L-glutamine + ATP + H2O = L-glutaminyl-tRNA(Gln) + L-glutamate + ADP + phosphate + H(+). The catalysed reaction is L-aspartyl-tRNA(Asn) + L-glutamine + ATP + H2O = L-asparaginyl-tRNA(Asn) + L-glutamate + ADP + phosphate + 2 H(+). Functionally, allows the formation of correctly charged Asn-tRNA(Asn) or Gln-tRNA(Gln) through the transamidation of misacylated Asp-tRNA(Asn) or Glu-tRNA(Gln) in organisms which lack either or both of asparaginyl-tRNA or glutaminyl-tRNA synthetases. The reaction takes place in the presence of glutamine and ATP through an activated phospho-Asp-tRNA(Asn) or phospho-Glu-tRNA(Gln). The polypeptide is Aspartyl/glutamyl-tRNA(Asn/Gln) amidotransferase subunit B (Jannaschia sp. (strain CCS1)).